A 397-amino-acid polypeptide reads, in one-letter code: ATP-dependent RNA helicase eIF4A (397 aa).

A Q motif motif is present at residues Tyr23–Gln51. The 171-residue stretch at Ile54–Ile224 folds into the Helicase ATP-binding domain. Residue Ala67–Thr74 coordinates ATP. The DEAD box signature appears at Asp172 to Asp175. Positions Gly235 to Phe396 constitute a Helicase C-terminal domain.

This sequence belongs to the DEAD box helicase family. eIF4A subfamily. In terms of assembly, component of the eIF4F complex, which composition varies with external and internal environmental conditions. It is composed of at least eIF4A, eIF4E and eIF4G.

It localises to the cytoplasm. It carries out the reaction ATP + H2O = ADP + phosphate + H(+). Its function is as follows. ATP-dependent RNA helicase which is a subunit of the eIF4F complex involved in cap recognition and is required for mRNA binding to ribosome. In the current model of translation initiation, eIF4A unwinds RNA secondary structures in the 5'-UTR of mRNAs which is necessary to allow efficient binding of the small ribosomal subunit, and subsequent scanning for the initiator codon. The chain is ATP-dependent RNA helicase eIF4A (TIF1) from Scheffersomyces stipitis (strain ATCC 58785 / CBS 6054 / NBRC 10063 / NRRL Y-11545) (Yeast).